The sequence spans 122 residues: Putative iron-sulfur cluster insertion protein ErpA (122 aa).

Iron-sulfur cluster contacts are provided by Cys50, Cys114, and Cys116.

It belongs to the HesB/IscA family. As to quaternary structure, homodimer. Iron-sulfur cluster serves as cofactor.

Its function is as follows. Required for insertion of 4Fe-4S clusters. In Cupriavidus necator (strain ATCC 17699 / DSM 428 / KCTC 22496 / NCIMB 10442 / H16 / Stanier 337) (Ralstonia eutropha), this protein is Putative iron-sulfur cluster insertion protein ErpA.